The primary structure comprises 131 residues: uncharacterized protein (131 aa).

The stretch at 4–44 forms a coiled coil; the sequence is QKPEQDVNKKIEELEKKVQELQEQLEKTKQAVKTVASILDN.

This is an uncharacterized protein from Sulfolobus islandicus filamentous virus (isolate Iceland/Hveragerdi) (SIFV).